Consider the following 512-residue polypeptide: SNF1-related protein kinase catalytic subunit alpha KIN11 (512 aa).

In terms of domain architecture, Protein kinase spans 20-272; sequence YKLGKTLGIG…IPEIRQHRWF (253 aa). Residues 26–34 and Lys49 each bind ATP; that span reads LGIGSFGKV. Asp143 functions as the Proton acceptor in the catalytic mechanism. A Phosphoserine modification is found at Ser165. The residue at position 176 (Thr176) is a Phosphothreonine; by GRIK1 or GRIK2. The tract at residues 291–391 is auto-inhibitory domain (AID); sequence AKKINEEIVQ…GARSQVPVDR (101 aa). Residues 293–333 form the UBA domain; the sequence is KINEEIVQEVVNMGFDRNQVLESLRNRTQNDATVTYYLLLD. The interval 295–512 is regulatory domain (RD); sequence NEEIVQEVVN…AAFLTELRVI (218 aa). The segment at 392-512 is PPI; the sequence is KWALGLQSHA…AAFLTELRVI (121 aa). The interval 399 to 512 is interaction with PAD1 and SKP1; it reads SHAHPREIMN…AAFLTELRVI (114 aa). The 49-residue stretch at 463-511 folds into the KA1 domain; sequence AMTSPTVIKFELQLYKAREEKYLLDIQRVNGPQFLFLDLCAAFLTELRV.

Belongs to the protein kinase superfamily. CAMK Ser/Thr protein kinase family. SNF1 subfamily. Subunit of a probable heterotrimeric complex consisting of an alpha catalytic (KIN10 or KIN11) subunit, and a beta (KINB) and a gamma (KING or SNF4) non-catalytic regulatory subunits. Interacts with KINB2, KINB3, SNF4 and probably with KINB1 and KING1. Interacts with SKP1/ASK1, PAD1 and the N-terminus of PRL1. Potential subunit of a SCF ubiquitin ligase complex consisting of a SNF1-related protein kinase, SKP1 and CUL1. The association of the SCF complex with the proteasome may be mediated by PAD1 and seems to be inhibited by the interaction with PRL1. Interacts with DSP4. Interacts with the begomovirus AL2 protein and the curtovirus L2 protein. Interacts with ATAF1. Interacts with CIPK14. Interacts with FLZ proteins through their FLZ-type zinc finger domains. Interacts with GEBP/STKR1. Interacts with REM4.1 and REM4.2. Interacts with ADK2. Interacts with IDD8. Interacts with FLZ3, FLZ9, TCP3, TCP13, HB21/ZHD3 and HB23/ZHD10. Interacts with WRI1. Interacts with IPK2b. Interacts with FLZ6 and FLZ10. Sumoylated by SIZ1. In terms of processing, phosphorylated at Thr-176 under submergence. Autophosphorylated. Phosphorylated at Thr-176 by GRIK1/SNAK2 and GRIK2/SNAK1. In terms of tissue distribution, expressed in roots, shoots, flower buds, flowers, siliques and leaves. Restrictly expressed to the base of the leaf, the vascular tissue, and the hydathodes.

It localises to the plastid. The protein localises to the chloroplast. Its subcellular location is the cytoplasm. The protein resides in the endoplasmic reticulum. It catalyses the reaction L-seryl-[protein] + ATP = O-phospho-L-seryl-[protein] + ADP + H(+). It carries out the reaction L-threonyl-[protein] + ATP = O-phospho-L-threonyl-[protein] + ADP + H(+). Its activity is regulated as follows. Inactivated by the begomovirus AL2 protein or the curtovirus L2 protein. Activated by phosphorylation at Thr-176 by GRIK1/SNAK2 and GRIK2/SNAK1. Inhibited by trehalose-6-phosphate. Its function is as follows. Catalytic subunit of the probable trimeric SNF1-related protein kinase (SnRK) complex, a central regulator of cellular energy homeostasis, which, in response to seemingly unrelated darkness, sugar and stress conditions, activates energy-producing pathways and inhibits energy-consuming processes. May play a role in a signal transduction cascade regulating gene expression and carbohydrate metabolism in higher plants. The SnRK complex may also be involved in the regulation of fatty acid synthesis by phosphorylation of acetyl-CoA carboxylase and in assimilation of nitrogen by phosphorylating nitrate reductase. In vitro, KIN11 exhibits kinase activity on sucrose phosphate synthase and the kinase activity is inhibited by PRL1. May be a subunit of a SCF ubiquitin ligase complex and thus be involved in proteasomal ubiquitination. Involved in innate antiviral defenses. Phosphorylates REM4.1 in vitro. Phosphorylates ADK2 in vitro. The protein is SNF1-related protein kinase catalytic subunit alpha KIN11 of Arabidopsis thaliana (Mouse-ear cress).